Here is a 251-residue protein sequence, read N- to C-terminus: Triosephosphate isomerase (251 aa).

9–11 (NWK) contributes to the substrate binding site. The active-site Electrophile is H96. E166 acts as the Proton acceptor in catalysis. Residues G172, S212, and 233 to 234 (GG) contribute to the substrate site.

It belongs to the triosephosphate isomerase family. Homodimer.

The protein localises to the cytoplasm. The catalysed reaction is D-glyceraldehyde 3-phosphate = dihydroxyacetone phosphate. It functions in the pathway carbohydrate biosynthesis; gluconeogenesis. The protein operates within carbohydrate degradation; glycolysis; D-glyceraldehyde 3-phosphate from glycerone phosphate: step 1/1. Functionally, involved in the gluconeogenesis. Catalyzes stereospecifically the conversion of dihydroxyacetone phosphate (DHAP) to D-glyceraldehyde-3-phosphate (G3P). In Pelodictyon phaeoclathratiforme (strain DSM 5477 / BU-1), this protein is Triosephosphate isomerase.